The primary structure comprises 259 residues: Protein IQ-DOMAIN 10 (259 aa).

Positions 18 to 39 (KNKSNRGNVHSETSNRVKPVES) are disordered. Residues 50–77 (EVAVIRIQKAFRAFKARKRLCSLKSARR) form the IQ domain. The segment at 61–71 (RAFKARKRLCS) is calmodulin-binding. The interval 226–259 (KPSKKPEKSSPNNVITKTSAKPDEVGNSKKPGSG) is disordered.

It belongs to the IQD family. Binds to multiple calmodulin (CaM) in the presence of Ca(2+) and CaM-like proteins.

It is found in the nucleus. The protein localises to the cytoplasm. The protein resides in the cytoskeleton. Functionally, may be involved in cooperative interactions with calmodulins or calmodulin-like proteins. Recruits calmodulin proteins to microtubules, thus being a potential scaffold in cellular signaling and trafficking. May associate with nucleic acids and regulate gene expression at the transcriptional or post-transcriptional level. The sequence is that of Protein IQ-DOMAIN 10 from Arabidopsis thaliana (Mouse-ear cress).